Here is a 619-residue protein sequence, read N- to C-terminus: MAASPGSGSANPRKFSEKIALHTQRQAEETRAFEQLMTDLTLSRVQFQKLQQLRLTQYHGGSLPNVSQLRNSAPEFQPSLHQADNVRGTRHHGLVERPARNRFHPLHRRSGDKPGRQFDGNAFAASYSSQHLDESWPRQQPPWKEEKHPGFRLTSALNRTNSDSALHTSALSTKPQDPYGGGGQSAWPAPYMGFCDGENDGHAEVAAFPGPLKEENLLNVPKPLPKHLWESKEIQSLSGRPRSCDVGGGNAFPHNGQNTGLSPFLGTLNTGGSLPDLTNLHYSAPLPASLDTSDHLFGSMSVGNSVGNLPAAMTHLGIRTSSGLQSSRSNPSIQATLSKMALSSSLKCHPQPSVANASALHPSLRLFSLSNPSLSTTNLSGPSRRRQPPVSPLTLSPGPEAHQGFSRQLSATSPLNPYPASQMVTSEQSPLSFLPTDAQAQVSPPPPYPTPQELPQPLLQQPHAQEPPTQQPQAAPSLPQSDFQLLTAQGSALTSFFPDVRFDQQPMRPSPAFPQQVPLVQQSHREPQDSFHLRPNPYSSCGSFPGTILTEDTNSNLFKGLSGGLSGMPEVSLDMDTPFPLEEELQIEPLSLDGLNMLSDSSMGLLDPSVEETFRADRL.

Residues serine 4 and serine 62 each carry the phosphoserine modification. The disordered stretch occupies residues 129–148; the sequence is SQHLDESWPRQQPPWKEEKH. Threonine 160 carries the phosphothreonine modification. Serine 162 carries the phosphoserine; by SIK2 modification. Lysine 232 participates in a covalent cross-link: Glycyl lysine isopeptide (Lys-Gly) (interchain with G-Cter in SUMO2). A phosphoserine mark is found at serine 273, serine 329, serine 332, serine 370, serine 391, serine 396, and serine 410. Positions 375-478 are disordered; it reads STTNLSGPSR…TQQPQAAPSL (104 aa). A required for interaction with PPP2CA and PPP2R1A region spans residues 380-401; the sequence is SGPSRRRQPPVSPLTLSPGPEA. Composition is skewed to polar residues over residues 405–415 and 422–431; these read FSRQLSATSPL and QMVTSEQSPL. Serine 443 carries the post-translational modification Phosphoserine. Residues 443–454 show a composition bias toward pro residues; the sequence is SPPPPYPTPQEL. The span at 455 to 478 shows a compositional bias: low complexity; it reads PQPLLQQPHAQEPPTQQPQAAPSL.

It belongs to the TORC family. As to quaternary structure, binding, as a tetramer, through its N-terminal region, with the bZIP domain of CREB1 enhances recruitment of TAF4 to the promoter. 'Arg-314' in the bZIP domain of CREB1 is essential for this interaction. Interacts (when phosphorylated at Ser-162 and Se-273) with 14-3-3 proteins. Interacts with YWHAE. Interacts (when phosphorylated at Ser-391) with phosphatase PP2A catalytic subunit PPP2CA and regulatory subunits PPP2R1A and PPP2R2A. In terms of processing, phosphorylation/dephosphorylation states of Ser-273 are required for regulating transduction of CREB activity. CRTCs/TORCs are inactive when phosphorylated, and active when dephosphorylated at this site. May be phosphorylated at Ser-391 by MAPK3/ERK1 and/or MAPK1/ERK2 or by some cyclin-dependent kinases such as CDK1,CDK2 or CDK5. Following adenylyl cyclase activation, dephosphorylated at Ser-162 and Ser-273 resulting in its dissociation from 14-3-3 proteins probably promoting CRTC3 translocation into the nucleus. Expressed in brown adipose tissues.

The protein localises to the nucleus. Its subcellular location is the cytoplasm. Transcriptional coactivator for CREB1 which activates transcription through both consensus and variant cAMP response element (CRE) sites. Acts as a coactivator, in the SIK/TORC signaling pathway, being active when dephosphorylated. Acts independently of CREB1 'Ser-133' phosphorylation. Enhances the interaction of CREB1 with TAF4. Regulates the expression of specific CREB-activated genes such as the steroidogenic gene, StAR. Potent coactivator of PPARGC1A and inducer of mitochondrial biogenesis in muscle cells. This is CREB-regulated transcription coactivator 3 (Crtc3) from Mus musculus (Mouse).